The following is a 62-amino-acid chain: Conotoxin reg3.5 (62 aa).

Positions 1 to 22 are cleaved as a signal peptide; the sequence is MMFKLGVLLTICLLLFPLTGTA. The propeptide occupies 23 to 49; it reads LDGDQLAEHMLDISSGINDRWFDPVRK. Intrachain disulfides connect C50–C60, C51–C58, and C56–C61.

The protein belongs to the conotoxin M superfamily. Expressed by the venom duct.

It localises to the secreted. This is Conotoxin reg3.5 from Conus regius (Crown cone).